We begin with the raw amino-acid sequence, 28 residues long: Humanin-like 4 (28 aa).

It belongs to the humanin family. In terms of tissue distribution, highly expressed in testis. Also expressed in kidney, heart, skeletal muscles and brain.

It is found in the secreted. Its subcellular location is the cytoplasm. Plays a role as a neuroprotective and antiapoptotic factor. The polypeptide is Humanin-like 4 (Homo sapiens (Human)).